A 177-amino-acid polypeptide reads, in one-letter code: Thymidine kinase (177 aa).

Residue Gly11–Ser18 coordinates ATP. Glu83 acts as the Proton acceptor in catalysis. Phe113 is a binding site for substrate. 2 residues coordinate Zn(2+): Cys138 and Cys141. Ile157–Gly161 provides a ligand contact to substrate. 2 residues coordinate Zn(2+): Cys170 and Cys173.

This sequence belongs to the thymidine kinase family. As to quaternary structure, homotetramer. Two molecules of substrate bind to each enzyme tetramer.

The enzyme catalyses thymidine + ATP = dTMP + ADP + H(+). In terms of biological role, phosphorylates thymidine and thymidine analogs, such as azidothymidine (AZT). Part of the salvage pathway for pyrimidine deoxyribonucleotide synthesis. In Cynomys gunnisoni (Gunnison's prairie dog), this protein is Thymidine kinase (OPG101).